A 220-amino-acid chain; its full sequence is Probable septum site-determining protein MinC (220 aa).

It belongs to the MinC family. In terms of assembly, interacts with MinD and FtsZ.

Cell division inhibitor that blocks the formation of polar Z ring septums. Rapidly oscillates between the poles of the cell to destabilize FtsZ filaments that have formed before they mature into polar Z rings. Prevents FtsZ polymerization. In Photobacterium profundum (strain SS9), this protein is Probable septum site-determining protein MinC.